A 261-amino-acid chain; its full sequence is Homeobox-leucine zipper protein HOX24 (261 aa).

2 disordered regions span residues 42–67 (AAAA…RKRR) and 160–188 (KLNE…NSVM). Residues 46 to 61 (GRGGGDGDGGGGGGGG) are compositionally biased toward gly residues. Residues 61–121 (GGERKRRFTE…NKRARWRSKQ (61 aa)) constitute a DNA-binding region (homeobox). Residues 120-164 (KQIEHDYAALRAQYDALHARVESLRQEKLALADQVDELRGKLNER) form a leucine-zipper region.

It belongs to the HD-ZIP homeobox family. Class I subfamily. Expressed in roots and panicles.

The protein localises to the nucleus. Functionally, probable transcription factor. This Oryza sativa subsp. japonica (Rice) protein is Homeobox-leucine zipper protein HOX24 (HOX24).